The sequence spans 116 residues: Putative pterin-4-alpha-carbinolamine dehydratase 1 (116 aa).

It belongs to the pterin-4-alpha-carbinolamine dehydratase family.

The enzyme catalyses (4aS,6R)-4a-hydroxy-L-erythro-5,6,7,8-tetrahydrobiopterin = (6R)-L-erythro-6,7-dihydrobiopterin + H2O. This Cupriavidus pinatubonensis (strain JMP 134 / LMG 1197) (Cupriavidus necator (strain JMP 134)) protein is Putative pterin-4-alpha-carbinolamine dehydratase 1.